The sequence spans 336 residues: Ribosomal RNA large subunit methyltransferase F (336 aa).

It belongs to the methyltransferase superfamily. METTL16/RlmF family.

The protein resides in the cytoplasm. It carries out the reaction adenosine(1618) in 23S rRNA + S-adenosyl-L-methionine = N(6)-methyladenosine(1618) in 23S rRNA + S-adenosyl-L-homocysteine + H(+). In terms of biological role, specifically methylates the adenine in position 1618 of 23S rRNA. This chain is Ribosomal RNA large subunit methyltransferase F, found in Yersinia pestis bv. Antiqua (strain Angola).